A 102-amino-acid polypeptide reads, in one-letter code: EPIDERMAL PATTERNING FACTOR-like protein 9 (102 aa).

The first 31 residues, 1-31, serve as a signal peptide directing secretion; it reads MKHEMMNIKPRCITIFFLLFALLLGNYVVQA. 3 disulfides stabilise this stretch: Cys65/Cys98, Cys70/Cys77, and Cys73/Cys100.

Belongs to the plant cysteine rich small secretory peptide family. Epidermal patterning factor subfamily. As to quaternary structure, interacts with ERECTA and TMM. As to expression, expressed in immature organs, including leaves, stems and flower buds, but not in roots, shoot apical meristem and petals. Detected in the mesophyll tissues but not in the epidermal tissues where stomata develop.

Its subcellular location is the secreted. The protein localises to the extracellular space. It localises to the apoplast. In terms of biological role, positively regulates stomatal density and patterning. Acts by competing with EPF2 (AC Q8LC53) for the same receptors, ERECTA (AC Q42371) and TMM (AC Q9SSD1). Not cleaved by the protease CRSP (AC Q9LNU1). The chain is EPIDERMAL PATTERNING FACTOR-like protein 9 from Arabidopsis thaliana (Mouse-ear cress).